The following is a 707-amino-acid chain: Drebrin (707 aa).

Ala2 carries the post-translational modification N-acetylalanine. Positions 3–134 constitute an ADF-H domain; the sequence is GVSFSGHRLE…DAGAIGQRLS (132 aa). 2 positions are modified to phosphoserine: Ser141 and Ser142. Residues 209 to 236 show a composition bias toward basic and acidic residues; the sequence is ERMEQERQEQEERERRYREREQQIEEHR. Disordered stretches follow at residues 209 to 438, 452 to 497, 531 to 557, 582 to 609, and 630 to 707; these read ERME…VCKE, AEEP…TSVA, WPGN…AEAS, LLNF…PLAA, and LEPE…EGGD. The residue at position 241 (Ser241) is a Phosphoserine. Residues 288–298 are compositionally biased toward basic and acidic residues; sequence DNPREFFRQQE. Over residues 329-343 the composition is skewed to low complexity; that stretch reads SDSGPSSSSSSSSSP. Position 342 is a phosphoserine (Ser342). The segment covering 355-364 has biased composition (polar residues); it reads RTPNLSSSLP. A phosphothreonine mark is found at Thr377 and Thr381. Over residues 380-395 the composition is skewed to polar residues; the sequence is PTRSPSDSSTASTPIT. Residues Ser383, Ser385, and Ser391 each carry the phosphoserine modification. A Phosphothreonine modification is found at Thr392. Over residues 409-420 the composition is skewed to pro residues; it reads QPPPPPPPPPPA. Over residues 428 to 438 the composition is skewed to basic and acidic residues; sequence PRLDGEEVCKE. Ser467 carries the post-translational modification Phosphoserine. Thr549 carries the phosphothreonine modification. Residues 639–652 are compositionally biased toward polar residues; that stretch reads NGETTQKEGTQQAS. At Ser659 the chain carries Phosphoserine. The segment covering 695–707 has biased composition (acidic residues); sequence PVPEEEEGFEGGD.

Interacts with RUFY. Interacts with CXCR4; this interaction is enhanced by antigenic stimulation. Interacts (via ADF-H domain) with ZMYND8 (via N-terminus); the interaction leads to sequestering of ZMYND8 in the cytoplasm. Post-translationally, ISGylated. As to expression, brain neurons.

Its subcellular location is the cytoplasm. The protein resides in the cell projection. It localises to the dendrite. The protein localises to the cell cortex. It is found in the cell junction. Its subcellular location is the growth cone. Actin cytoskeleton-organizing protein that plays a role in the formation of cell projections. Required for actin polymerization at immunological synapses (IS) and for the recruitment of the chemokine receptor CXCR4 to IS. Plays a role in dendritic spine morphogenesis and organization, including the localization of the dopamine receptor DRD1 to the dendritic spines. Involved in memory-related synaptic plasticity in the hippocampus. This Rattus norvegicus (Rat) protein is Drebrin (Dbn1).